We begin with the raw amino-acid sequence, 411 residues long: Glutamate dehydrogenase 1, mitochondrial (411 aa).

The transit peptide at 1-18 (MNALAATSRNFKQAAKLL) directs the protein to the mitochondrion. K102 is an active-site residue.

The protein belongs to the Glu/Leu/Phe/Val dehydrogenases family.

Its subcellular location is the mitochondrion. It catalyses the reaction L-glutamate + NAD(+) + H2O = 2-oxoglutarate + NH4(+) + NADH + H(+). The enzyme catalyses L-glutamate + NADP(+) + H2O = 2-oxoglutarate + NH4(+) + NADPH + H(+). This Oryza sativa subsp. indica (Rice) protein is Glutamate dehydrogenase 1, mitochondrial (GDH1).